Reading from the N-terminus, the 149-residue chain is Transcriptional repressor NrdR (149 aa).

A zinc finger spans residues 3 to 34 (CPFCSATDTKVIDSRLVADGHQVRRRRECTEC). One can recognise an ATP-cone domain in the interval 49–139 (PRVIKRDGTR…VYRAFEDVSQ (91 aa)).

The protein belongs to the NrdR family. The cofactor is Zn(2+).

In terms of biological role, negatively regulates transcription of bacterial ribonucleotide reductase nrd genes and operons by binding to NrdR-boxes. This Shewanella frigidimarina (strain NCIMB 400) protein is Transcriptional repressor NrdR.